Reading from the N-terminus, the 113-residue chain is MTVNVYDLANELERGIRALPEYQALVQAKAKIDEDEEAKKLWTEFTEFQMKIQGLIQTGQAPTPEVQTEMQSFNQKIEANPLLKEYATAQQALGVYVNDIERIIFSPLQDIAK.

It belongs to the UPF0342 family.

This is UPF0342 protein SMU_782 from Streptococcus mutans serotype c (strain ATCC 700610 / UA159).